A 254-amino-acid polypeptide reads, in one-letter code: Small ribosomal subunit protein uS2 (254 aa).

This sequence belongs to the universal ribosomal protein uS2 family.

The sequence is that of Small ribosomal subunit protein uS2 from Legionella pneumophila (strain Corby).